The primary structure comprises 504 residues: Occludin (504 aa).

The Cytoplasmic segment spans residues 1–57; that stretch reads MFSKKSYDGPPAGYGPPTGYGAPTADYGYGSPPPGSYYVDDAPQLFYKWTSPPGAVR. The region spanning 51–253 is the MARVEL domain; it reads SPPGAVRGLQ…ICFFAQKTRS (203 aa). Residues 58-80 traverse the membrane as a helical segment; the sequence is GLQAGVLVLCIAIFACVASTLAW. Residues 81 to 123 are Extracellular-facing; the sequence is DYGYGLGGAYGTGLGGFYGSNYYGSGLSYSYGYGGYYGGVNQR. Residues 124–148 traverse the membrane as a helical segment; sequence TANGFMIAMAVLCFLAQLGLLVAAL. At 149 to 158 the chain is on the cytoplasmic side; that stretch reads SKSGATRSRR. A helical membrane pass occupies residues 159–183; the sequence is FYLAVLVLSAVLAFVMLIASIVYIM. Residues 184-227 are Extracellular-facing; it reads GVNPQAQMSSGYYYSPLLAMCSQAYGSTYLNQYIYHYCTVDPQE. C204 and C221 are oxidised to a cystine. The helical transmembrane segment at 228 to 249 threads the bilayer; it reads AVAAVCGFLIVILLCLICFFAQ. The Cytoplasmic portion of the chain corresponds to 250–504; sequence KTRSKIWRYG…MVSAYDKVRG (255 aa). The disordered stretch occupies residues 324–396; that stretch reads PSGTYSSRGD…VESSDERDQE (73 aa). The span at 361-370 shows a compositional bias: basic residues; it reads PARRGRRRRR. Residues Y379 and Y383 each carry the phosphotyrosine modification. Positions 379-385 are interaction with TJP1; it reads YETDYTT. An OCEL domain is found at 396-504; that stretch reads EQWASLYPPI…MVSAYDKVRG (109 aa). Residues 412 to 471 are a coiled coil; sequence QRYKQEFDTDLKRYKQLCAEMDSINDRLNQLSRRLDSITEDSPQYQDVAEEYNQLKDLKR.

It belongs to the ELL/occludin family. As to quaternary structure, interacts with TJP1 and TJP3. Phosphorylated. As to expression, localized at tight junctions of both epithelial and endothelial cells. Highly expressed in lung and liver. Expressed at a lower level in brain.

The protein resides in the cell membrane. Its subcellular location is the cell junction. The protein localises to the tight junction. Its function is as follows. May play a role in the formation and regulation of the tight junction (TJ) paracellular permeability barrier. Interacts with ZO-1. The chain is Occludin (OCLN) from Gallus gallus (Chicken).